We begin with the raw amino-acid sequence, 344 residues long: Golgi-associated RAB2 interactor protein 1B (344 aa).

Belongs to the GARIN family.

It is found in the golgi apparatus. RAB2B effector protein required for accurate acrosome formation and normal male fertility. In complex with RAB2A/RAB2B, seems to suppress excessive vesicle trafficking during acrosome formation. In Rattus norvegicus (Rat), this protein is Golgi-associated RAB2 interactor protein 1B (Garin1b).